The chain runs to 414 residues: Carboxynorspermidine synthase (414 aa).

This sequence belongs to the saccharopine dehydrogenase family. Carboxynorspermidine synthase subfamily. In terms of assembly, homodimer.

The enzyme catalyses carboxynorspermidine + NADP(+) + H2O = L-aspartate 4-semialdehyde + propane-1,3-diamine + NADPH + H(+). It carries out the reaction carboxyspermidine + NADP(+) + H2O = L-aspartate 4-semialdehyde + putrescine + NADPH + H(+). Its activity is regulated as follows. Activated by dithiothreitol and inhibited by SH-reactive compounds. Involved in norspermidine biosynthesis. Catalyzes the synthesis of carboxynorspermidine from L-aspartate 4-semialdehyde and 1,3-diaminopropane. Is also slightly active with putrescine as a substrate. This chain is Carboxynorspermidine synthase, found in Vibrio alginolyticus (strain ATCC 17749 / DSM 2171 / NBRC 15630 / NCIMB 1903 / NCTC 12160 / XII-53).